Here is a 90-residue protein sequence, read N- to C-terminus: Probable Fe(2+)-trafficking protein (90 aa).

Belongs to the Fe(2+)-trafficking protein family.

Could be a mediator in iron transactions between iron acquisition and iron-requiring processes, such as synthesis and/or repair of Fe-S clusters in biosynthetic enzymes. The protein is Probable Fe(2+)-trafficking protein of Ectopseudomonas mendocina (strain ymp) (Pseudomonas mendocina).